Here is a 956-residue protein sequence, read N- to C-terminus: Dual specificity protein kinase YAK1 homolog (956 aa).

The region spanning 122–464 is the Protein kinase domain; sequence YIVKDLLGHG…PFQAAKHPFI (343 aa). Residues 128 to 136 and Lys151 contribute to the ATP site; that span reads LGHGTFGQV. Ser222 is modified (phosphoserine). The active-site Proton acceptor is the Asp249. Disordered stretches follow at residues 620-657, 672-781, and 806-956; these read LGTS…HGSP, SAGY…NYSD, and GSTD…GSIA. A compositionally biased stretch (polar residues) spans 622 to 636; sequence TSPSQFTPNTNNQFL. Over residues 672-691 the composition is skewed to low complexity; that stretch reads SAGYSGGSQSQDSSLSQAQG. Composition is skewed to polar residues over residues 697–713, 725–757, and 806–817; these read FYQN…SPSR, QTQG…SSTA, and GSTDASSYSRRF. The span at 818 to 830 shows a compositional bias: low complexity; that stretch reads NSNASTSSSNPTT. Composition is skewed to polar residues over residues 838-849, 870-884, and 902-912; these read QAFSQVETGSPP, VSQN…QPPQ, and MNAQLPPSNTN. Residues 913-924 are compositionally biased toward low complexity; it reads SGGQQRSPRSSS. Residues 937–947 show a composition bias toward polar residues; it reads NHVPNVPSTSH.

Belongs to the protein kinase superfamily. Ser/Thr protein kinase family. Post-translationally, autophosphorylated at Ser-222.

It carries out the reaction L-seryl-[protein] + ATP = O-phospho-L-seryl-[protein] + ADP + H(+). The enzyme catalyses L-threonyl-[protein] + ATP = O-phospho-L-threonyl-[protein] + ADP + H(+). The catalysed reaction is L-tyrosyl-[protein] + ATP = O-phospho-L-tyrosyl-[protein] + ADP + H(+). Its function is as follows. Dual specificity protein kinase that phosphorylates ANN1, ANN2 and CP29B at serine and threonine residues, and ANN1, ANN2 and ANN4 at tyrosine residues. May regulate the phosphorylation status of annexin proteins. Acts as a positive regulator in abscisic acid (ABA)-mediated regulation of postgermination growth and drought response. May regulate the expression of ABA-responsive genes such as RD22, RD29A, LTI65/RD29B and RAB18. In Arabidopsis thaliana (Mouse-ear cress), this protein is Dual specificity protein kinase YAK1 homolog.